Here is a 275-residue protein sequence, read N- to C-terminus: NH(3)-dependent NAD(+) synthetase (275 aa).

Residue 50-57 (GISGGVDS) coordinates ATP. Mg(2+) is bound at residue aspartate 56. Position 147 (arginine 147) interacts with deamido-NAD(+). Residue threonine 167 participates in ATP binding. Position 172 (glutamate 172) interacts with Mg(2+). 2 residues coordinate deamido-NAD(+): lysine 180 and aspartate 187. Residues lysine 196 and threonine 218 each coordinate ATP. 267 to 268 (HK) provides a ligand contact to deamido-NAD(+).

This sequence belongs to the NAD synthetase family. Homodimer.

It carries out the reaction deamido-NAD(+) + NH4(+) + ATP = AMP + diphosphate + NAD(+) + H(+). It participates in cofactor biosynthesis; NAD(+) biosynthesis; NAD(+) from deamido-NAD(+) (ammonia route): step 1/1. Its function is as follows. Catalyzes the ATP-dependent amidation of deamido-NAD to form NAD. Uses ammonia as a nitrogen source. This Pseudomonas entomophila (strain L48) protein is NH(3)-dependent NAD(+) synthetase.